The following is a 351-amino-acid chain: DNA polymerase IV (351 aa).

One can recognise a UmuC domain in the interval 4–185 (IIHVDMDCFF…LPLAKIPGVG (182 aa)). Mg(2+) contacts are provided by Asp8 and Asp103. Residue Glu104 is part of the active site.

Belongs to the DNA polymerase type-Y family. In terms of assembly, monomer. Mg(2+) is required as a cofactor.

It is found in the cytoplasm. The enzyme catalyses DNA(n) + a 2'-deoxyribonucleoside 5'-triphosphate = DNA(n+1) + diphosphate. Poorly processive, error-prone DNA polymerase involved in untargeted mutagenesis. Copies undamaged DNA at stalled replication forks, which arise in vivo from mismatched or misaligned primer ends. These misaligned primers can be extended by PolIV. Exhibits no 3'-5' exonuclease (proofreading) activity. May be involved in translesional synthesis, in conjunction with the beta clamp from PolIII. The protein is DNA polymerase IV of Salmonella arizonae (strain ATCC BAA-731 / CDC346-86 / RSK2980).